The sequence spans 804 residues: Phenylalanine--tRNA ligase beta subunit (804 aa).

In terms of domain architecture, tRNA-binding spans 38–148 (RAAFRAFTIA…ENAPVGTSFA (111 aa)). Residues 401–476 (HTARVIDFPV…RIHGINRIDP (76 aa)) enclose the B5 domain. Asp-454, Asp-460, Glu-463, and Glu-464 together coordinate Mg(2+). Residues 710–803 (SLFQSLKRDY…VAKQTGGVLR (94 aa)) form the FDX-ACB domain.

Belongs to the phenylalanyl-tRNA synthetase beta subunit family. Type 1 subfamily. Tetramer of two alpha and two beta subunits. The cofactor is Mg(2+).

Its subcellular location is the cytoplasm. The enzyme catalyses tRNA(Phe) + L-phenylalanine + ATP = L-phenylalanyl-tRNA(Phe) + AMP + diphosphate + H(+). The polypeptide is Phenylalanine--tRNA ligase beta subunit (Brucella melitensis biotype 1 (strain ATCC 23456 / CCUG 17765 / NCTC 10094 / 16M)).